Reading from the N-terminus, the 377-residue chain is DNA replication and repair protein RecF (377 aa).

30 to 37 (GLNGSGKT) contributes to the ATP binding site.

It belongs to the RecF family.

The protein resides in the cytoplasm. Functionally, the RecF protein is involved in DNA metabolism; it is required for DNA replication and normal SOS inducibility. RecF binds preferentially to single-stranded, linear DNA. It also seems to bind ATP. The polypeptide is DNA replication and repair protein RecF (Cytophaga hutchinsonii (strain ATCC 33406 / DSM 1761 / CIP 103989 / NBRC 15051 / NCIMB 9469 / D465)).